Consider the following 409-residue polypeptide: Putative lipoate-protein ligase A (409 aa).

The BPL/LPL catalytic domain occupies 146–330 (GPDNCRLLFY…RFQKTFKVDG (185 aa)). Residues arginine 188, 193–196 (GTVL), and lysine 249 each bind ATP. (R)-lipoate is bound at residue lysine 249.

Belongs to the LplA family. Monomer.

It carries out the reaction L-lysyl-[lipoyl-carrier protein] + (R)-lipoate + ATP = N(6)-[(R)-lipoyl]-L-lysyl-[lipoyl-carrier protein] + AMP + diphosphate + H(+). It participates in protein modification; protein lipoylation via exogenous pathway; protein N(6)-(lipoyl)lysine from lipoate: step 1/2. Its pathway is protein modification; protein lipoylation via exogenous pathway; protein N(6)-(lipoyl)lysine from lipoate: step 2/2. Its function is as follows. Catalyzes both the ATP-dependent activation of exogenously supplied lipoate to lipoyl-AMP and the transfer of the activated lipoyl onto the lipoyl domains of lipoate-dependent enzymes. The sequence is that of Putative lipoate-protein ligase A (AIM22) from Saccharomyces cerevisiae (strain RM11-1a) (Baker's yeast).